A 322-amino-acid polypeptide reads, in one-letter code: uncharacterized protein (322 aa).

4 helical membrane passes run 24–44, 68–88, 100–120, and 125–145; these read LLHL…IQIT, LFFE…LIFI, IVTS…TPTF, and VQLI…MPSL.

Its subcellular location is the cell membrane. This is an uncharacterized protein from Bacillus subtilis (strain 168).